The sequence spans 487 residues: uncharacterized protein (487 aa).

ABC transporter domains are found at residues 5 to 249 and 265 to 487; these read VKFA…IPVK and ISME…VIHA. ATP is bound at residue 297-304; that stretch reads GSNGSGKT.

It belongs to the ABC transporter superfamily.

It is found in the mitochondrion. This is an uncharacterized protein from Schizosaccharomyces pombe (strain 972 / ATCC 24843) (Fission yeast).